Consider the following 456-residue polypeptide: Cysteine synthase 2 (456 aa).

The chain crosses the membrane as a helical span at residues 9-29 (VYGTVALTAAFAAGILVTLGF).

Belongs to the cysteine synthase/cystathionine beta-synthase family. The cofactor is pyridoxal 5'-phosphate.

It is found in the mitochondrion outer membrane. It carries out the reaction O-acetyl-L-serine + hydrogen sulfide = L-cysteine + acetate. Putative cysteine synthase that catalyzes the conversion of O-acetyl-L-serine (OAS) into cysteine, the last step in the cysteine biosynthesis pathway. However, in contrast to cysteine synthase cys-17, this CS-like protein may not function in cysteine biosynthesis. In Neurospora crassa (strain ATCC 24698 / 74-OR23-1A / CBS 708.71 / DSM 1257 / FGSC 987), this protein is Cysteine synthase 2.